A 359-amino-acid chain; its full sequence is Fructose-bisphosphate aldolase class 2 (359 aa).

N6-acetyllysine is present on lysine 9. Residue serine 62 coordinates D-glyceraldehyde 3-phosphate. Aspartate 110 functions as the Proton donor in the catalytic mechanism. Residues histidine 111, aspartate 145, glutamate 175, and histidine 227 each coordinate Zn(2+). Position 228 (glycine 228) interacts with dihydroxyacetone phosphate. Position 265 (histidine 265) interacts with Zn(2+). Dihydroxyacetone phosphate contacts are provided by residues 266–268 and 287–290; these read GGS and NIDT.

This sequence belongs to the class II fructose-bisphosphate aldolase family. Homodimer. Zn(2+) is required as a cofactor.

The catalysed reaction is beta-D-fructose 1,6-bisphosphate = D-glyceraldehyde 3-phosphate + dihydroxyacetone phosphate. It functions in the pathway carbohydrate degradation; glycolysis; D-glyceraldehyde 3-phosphate and glycerone phosphate from D-glucose: step 4/4. Functionally, catalyzes the aldol condensation of dihydroxyacetone phosphate (DHAP or glycerone-phosphate) with glyceraldehyde 3-phosphate (G3P) to form fructose 1,6-bisphosphate (FBP) in gluconeogenesis and the reverse reaction in glycolysis. This Escherichia coli O157:H7 protein is Fructose-bisphosphate aldolase class 2 (fbaA).